Here is a 490-residue protein sequence, read N- to C-terminus: Cobyric acid synthase (490 aa).

Residues 253-440 (KLRVAAPAAP…LHGVFDEPAA (188 aa)) enclose the GATase cobBQ-type domain. Residue Cys-334 is the Nucleophile of the active site. His-432 is a catalytic residue.

The protein belongs to the CobB/CobQ family. CobQ subfamily.

The protein operates within cofactor biosynthesis; adenosylcobalamin biosynthesis. In terms of biological role, catalyzes amidations at positions B, D, E, and G on adenosylcobyrinic A,C-diamide. NH(2) groups are provided by glutamine, and one molecule of ATP is hydrogenolyzed for each amidation. The chain is Cobyric acid synthase from Chromobacterium violaceum (strain ATCC 12472 / DSM 30191 / JCM 1249 / CCUG 213 / NBRC 12614 / NCIMB 9131 / NCTC 9757 / MK).